The following is a 228-amino-acid chain: MQKLKQQVFEANMDLPRYGLVTFTWGNVSAIDRERGLVVIKPSGVAYETMKADDMVVVDMSGKVVEGEYRPSSDTATHLELYRRYPSLGGIVHTHSTHATAWAQAGLAIPALGTTHADYFFGDIPCTRGLSEEEVQGEYELNTGKVIIETLGNAEPLHTPGIVVYQHGPFAWGKDAHDAVHNAVVMEEVAKMAWIARSINPQLNHIDSYLMNKHFMRKHGPNAYYGQK.

Substrate is bound by residues 26-27 (GN), 43-44 (SG), and 72-73 (SS). Positions 74, 93, and 95 each coordinate Zn(2+). D118 acts as the Proton donor/acceptor in catalysis. Position 167 (H167) interacts with Zn(2+). Y225 functions as the Proton donor/acceptor in the catalytic mechanism.

Belongs to the aldolase class II family. AraD/FucA subfamily. It depends on Zn(2+) as a cofactor.

It carries out the reaction L-ribulose 5-phosphate = D-xylulose 5-phosphate. The protein operates within cofactor degradation; L-ascorbate degradation; D-xylulose 5-phosphate from L-ascorbate: step 4/4. Its function is as follows. Catalyzes the isomerization of L-ribulose 5-phosphate to D-xylulose 5-phosphate. Is involved in the anaerobic L-ascorbate utilization. The protein is L-ribulose-5-phosphate 4-epimerase UlaF of Shigella flexneri.